The sequence spans 238 residues: Orotidine 5'-phosphate decarboxylase (238 aa).

Substrate contacts are provided by residues Asp-10, Lys-32, 59–68 (DLKLHDIPNT), Thr-122, Arg-184, Gln-193, Gly-213, and Arg-214. Lys-61 serves as the catalytic Proton donor.

Belongs to the OMP decarboxylase family. Type 1 subfamily. As to quaternary structure, homodimer.

The enzyme catalyses orotidine 5'-phosphate + H(+) = UMP + CO2. The protein operates within pyrimidine metabolism; UMP biosynthesis via de novo pathway; UMP from orotate: step 2/2. Functionally, catalyzes the decarboxylation of orotidine 5'-monophosphate (OMP) to uridine 5'-monophosphate (UMP). This chain is Orotidine 5'-phosphate decarboxylase, found in Bacillus mycoides (strain KBAB4) (Bacillus weihenstephanensis).